A 420-amino-acid polypeptide reads, in one-letter code: Tubulin-specific chaperone C (420 aa).

A coiled-coil region spans residues 9 to 142 (NNNNDEENSK…QIDKSKEKYM (134 aa)). Residues 31 to 49 (KQRLQSKLEKREISNKEQI) are compositionally biased toward basic and acidic residues. Disordered regions lie at residues 31–52 (KQRL…IDQS), 138–193 (KEKY…NNNK), and 222–257 (EIGN…NNNN). Composition is skewed to low complexity over residues 172–192 (ETFN…NNNN) and 228–257 (INNN…NNNN). In terms of domain architecture, C-CAP/cofactor C-like spans 216–366 (PPKKEEEIGN…LKQQQQQQQQ (151 aa)).

The protein belongs to the TBCC family. As to quaternary structure, supercomplex made of cofactors A to E. Cofactors A and D function by capturing and stabilizing tubulin in a quasi-native conformation. Cofactor E binds to the cofactor D-tubulin complex; interaction with cofactor C then causes the release of tubulin polypeptides that are committed to the native state.

Its function is as follows. Tubulin-folding protein; involved in the final step of the tubulin folding pathway. The polypeptide is Tubulin-specific chaperone C (tbcc) (Dictyostelium discoideum (Social amoeba)).